The sequence spans 681 residues: Hydroxyproline O-galactosyltransferase GALT6 (681 aa).

The Cytoplasmic portion of the chain corresponds to 1 to 28; sequence MRKPKLSKLERLEKFDIFVSLSKQRSVQ. A helical; Signal-anchor for type II membrane protein transmembrane segment spans residues 29–49; the sequence is ILMAVGLLYMLLITFEIPFVF. Over 50–681 the chain is Lumenal; sequence KTGLSSLSQD…TGKPQCCNMR (632 aa). Positions 57-80 are disordered; the sequence is SQDPLTRPEKHNSQRELQERRAPT. Basic and acidic residues predominate over residues 62–78; it reads TRPEKHNSQRELQERRA. The Galectin domain occupies 187–401; the sequence is NIMELPCGLT…DIDVHSVFAG (215 aa). Asn-629 carries an N-linked (GlcNAc...) asparagine glycan.

The protein belongs to the glycosyltransferase 31 family. Mn(2+) serves as cofactor. In terms of tissue distribution, expressed in junveile leaves and stems, and at lower levels in cauline leaves and siliques.

The protein resides in the golgi apparatus membrane. The protein operates within protein modification; protein glycosylation. Functionally, possesses hydroxyproline O-galactosyltransferase activity. Transfers galactose from UDP-galactose to hydroxyproline residues in the arabinogalactan proteins (AGPs). Is specific for AGPs containing non-contiguous peptidyl hydroxyproline residues. Utilizes UDP-galactose solely as sugar donor. The addition of galactose onto the peptidyl hydroxyproline residues in AGP core proteins represents the first committed step in arabinogalactan polysaccharide addition. AGP glycans play essential roles in both vegetative and reproductive plant growth. This Arabidopsis thaliana (Mouse-ear cress) protein is Hydroxyproline O-galactosyltransferase GALT6.